Consider the following 222-residue polypeptide: Glutathione S-transferase (222 aa).

Residues 3–83 enclose the GST N-terminal domain; it reads GKPKLHYTRG…YIAGKYNLYG (81 aa). Residues Tyr-9, Arg-45, 54-55, and 67-68 contribute to the glutathione site; these read QV and QS. The 124-residue stretch at 85–208 folds into the GST C-terminal domain; the sequence is DLKERAWIDM…QPGSQRKPPL (124 aa).

It belongs to the GST superfamily. Alpha family. Homodimer.

Its subcellular location is the cytoplasm. The enzyme catalyses RX + glutathione = an S-substituted glutathione + a halide anion + H(+). Functionally, conjugation of reduced glutathione to a wide number of exogenous and endogenous hydrophobic electrophiles. The polypeptide is Glutathione S-transferase (Gallus gallus (Chicken)).